The sequence spans 485 residues: MWYTSTRGMAPRVNFEGALFSGYAPDGGLYMPEELPRLDKETLRHWSTLSYRSLVKELCALFVGLELIPRHDLNGLIDQAFSRFRHRDVVHLCKLKNGLNILELWHGVTYAFKDLSLSCTAQFLQYFLEKKKKHVTIVVGTSGDTGSAAIESVQGSKNVDIIVLLPKGHCSKIQELQMTTVVKENVHVFGVEGNSDELDEPIKAVFADVAFVQRHNLMSLNSINWSRVLVQMAHHFFAYFQCTPSLDMHLLPTVEVVVPTGAGGNLAAGCIAQKMGLPISLVVAVNRNDIIHRTVQKGDFSLCEVVRKTLASAMDIQVPYNMERIFWLLAGSDSQTTRALMEQFERTQSLHLPKDLHSKLSEAVTSESVSDEAITQTMGRCWEENQYLLCPHSATAVSYHYQQTDSGQPSSIPRCCLAPASAVKFPEAVQAAGLTPETPAEILALEHKETRCTPMRRGDDWTQMLRDTIEALSLRWKGCVENTAE.

Lysine 113 carries the N6-(pyridoxal phosphate)lysine modification.

Belongs to the threonine synthase family. Pyridoxal 5'-phosphate serves as cofactor.

Acts as a catabolic phospho-lyase on both gamma- and beta-phosphorylated substrates. Degrades O-phospho-threonine (PThr) to alpha-ketobutyrate, ammonia and phosphate. This Rattus norvegicus (Rat) protein is Threonine synthase-like 2 (Thnsl2).